The primary structure comprises 559 residues: Inositol-3-phosphate synthase 1 (559 aa).

Glycine 67, glycine 68, asparagine 69, asparagine 70, aspartate 141, serine 177, valine 178, glutamine 188, arginine 191, threonine 228, alanine 229, asparagine 230, threonine 231, glycine 278, serine 279, aspartate 303, serine 306, asparagine 337, asparagine 338, aspartate 339, and lysine 352 together coordinate NAD(+). Serine 279 is modified (phosphoserine). Serine 357 is subject to Phosphoserine. Residues glycine 390, aspartate 391, aspartate 419, and serine 420 each coordinate NAD(+).

This sequence belongs to the myo-inositol 1-phosphate synthase family. NAD(+) is required as a cofactor.

It localises to the cytoplasm. The enzyme catalyses D-glucose 6-phosphate = 1D-myo-inositol 3-phosphate. Its pathway is polyol metabolism; myo-inositol biosynthesis; myo-inositol from D-glucose 6-phosphate: step 1/2. Its function is as follows. Key enzyme in myo-inositol biosynthesis pathway that catalyzes the conversion of glucose 6-phosphate to 1-myo-inositol 1-phosphate in a NAD-dependent manner. Rate-limiting enzyme in the synthesis of all inositol-containing compounds. The chain is Inositol-3-phosphate synthase 1 (ISYNA1) from Macaca fascicularis (Crab-eating macaque).